The following is a 260-amino-acid chain: Proteasome subunit alpha (260 aa).

It belongs to the peptidase T1A family. In terms of assembly, the 20S proteasome core is composed of 14 alpha and 14 beta subunits that assemble into four stacked heptameric rings, resulting in a barrel-shaped structure. The two inner rings, each composed of seven catalytic beta subunits, are sandwiched by two outer rings, each composed of seven alpha subunits. The catalytic chamber with the active sites is on the inside of the barrel. Has a gated structure, the ends of the cylinder being occluded by the N-termini of the alpha-subunits. Is capped at one or both ends by the proteasome regulatory ATPase, PAN.

It localises to the cytoplasm. With respect to regulation, the formation of the proteasomal ATPase PAN-20S proteasome complex, via the docking of the C-termini of PAN into the intersubunit pockets in the alpha-rings, triggers opening of the gate for substrate entry. Interconversion between the open-gate and close-gate conformations leads to a dynamic regulation of the 20S proteasome proteolysis activity. Functionally, component of the proteasome core, a large protease complex with broad specificity involved in protein degradation. The sequence is that of Proteasome subunit alpha from Pyrococcus abyssi (strain GE5 / Orsay).